Consider the following 167-residue polypeptide: Putative defense protein Hdd11-like (167 aa).

A signal peptide spans 1–18 (MMFTYVVAVASVVALTSA). The region spanning 19–167 (YPTGAPPSAC…ESAPVKVLSH (149 aa)) is the Reelin domain. C28 and C105 are joined by a disulfide.

Belongs to the insect defense protein family. As to expression, in larvae, high expression in the fat body and low expression in midgut, hemocytes and malpighian tubules. No expression in silkgland.

The protein localises to the secreted. Functionally, may have antimicrobial activity. In Samia ricini (Indian eri silkmoth), this protein is Putative defense protein Hdd11-like.